We begin with the raw amino-acid sequence, 191 residues long: Repressor Rok (191 aa).

The stretch at 2–43 forms a coiled coil; the sequence is FNEREALRLRLEQLNEAEVKVIREYQIERDKIYAKLRELDRN. A compositionally biased stretch (low complexity) spans 75 to 96; the sequence is SYQPQSQQQSVQPQLQSISSLP. Residues 75–116 are disordered; it reads SYQPQSQQQSVQPQLQSISSLPAGIPDGTTRRRRGTARPGSK. The segment at 95–191 is DNA-binding; sequence LPAGIPDGTT…EIESAESANE (97 aa).

Its subcellular location is the cytoplasm. It localises to the nucleoid. Its function is as follows. Repressor of comK, the master regulator of competence development. Overexpression seems to be lethal. Represses at least 20 genes that specify membrane-localized and secreted proteins, including some that encode products with antibiotic activity. Binds to many AT-rich sites in the chromosome, many of which are known or thought to derive from horizontal gene transfer; helps keep mobile element ICEBs1 quiescent in the genome. Binds to its own promoter and is thus probably autoregulatory. In Bacillus subtilis (strain 168), this protein is Repressor Rok.